A 790-amino-acid chain; its full sequence is Cadherin-6 (790 aa).

The N-terminal stretch at 1-18 (MRTYRYFLLLFWVGQPYP) is a signal peptide. The propeptide occupies 19–53 (TFSTPLSKRTSGFPAKKRTLELSGNSKNELSRSKR). Cadherin domains are found at residues 54–159 (SWMW…EPIF), 160–268 (TKEV…PPRF), 269–383 (PQST…PPVF), 384–486 (SKLA…DNPP), and 487–608 (EFAE…LVHP). Residues 54–615 (SWMWNQFFLL…VHPTGLSTGA (562 aa)) are Extracellular-facing. Asparagine 255 carries an N-linked (GlcNAc...) asparagine glycan. The tract at residues 261–291 (VNDNPPRFPQSTYQFKTPESSPPGTPIGRIK) is disordered. Over residues 269–279 (PQSTYQFKTPE) the composition is skewed to polar residues. N-linked (GlcNAc...) asparagine glycans are attached at residues asparagine 399, asparagine 437, asparagine 455, and asparagine 536. The chain crosses the membrane as a helical span at residues 616–636 (LIAILLCIVTLLVTVVLFAAL). The Cytoplasmic segment spans residues 637–790 (RRQRKKEPLI…YGGVDSDKDS (154 aa)). Residues serine 786 and serine 790 each carry the phosphoserine modification.

Its subcellular location is the cell membrane. Functionally, cadherins are calcium-dependent cell adhesion proteins. They preferentially interact with themselves in a homophilic manner in connecting cells; cadherins may thus contribute to the sorting of heterogeneous cell types. In Bos taurus (Bovine), this protein is Cadherin-6 (CDH6).